Consider the following 457-residue polypeptide: tRNA-2-methylthio-N(6)-dimethylallyladenosine synthase (457 aa).

The 118-residue stretch at 3-120 folds into the MTTase N-terminal domain; it reads KKVYVKTFGC…LPQMIDARRT (118 aa). Residues C12, C49, C83, C157, C161, and C164 each contribute to the [4Fe-4S] cluster site. The region spanning 143–377 is the Radical SAM core domain; sequence RVEGPTAFVS…QATIEENVAR (235 aa). Positions 380 to 447 constitute a TRAM domain; sequence QSMVGKVERI…PHSLRGELVL (68 aa).

It belongs to the methylthiotransferase family. MiaB subfamily. Monomer. [4Fe-4S] cluster is required as a cofactor.

It localises to the cytoplasm. The enzyme catalyses N(6)-dimethylallyladenosine(37) in tRNA + (sulfur carrier)-SH + AH2 + 2 S-adenosyl-L-methionine = 2-methylsulfanyl-N(6)-dimethylallyladenosine(37) in tRNA + (sulfur carrier)-H + 5'-deoxyadenosine + L-methionine + A + S-adenosyl-L-homocysteine + 2 H(+). Catalyzes the methylthiolation of N6-(dimethylallyl)adenosine (i(6)A), leading to the formation of 2-methylthio-N6-(dimethylallyl)adenosine (ms(2)i(6)A) at position 37 in tRNAs that read codons beginning with uridine. This Burkholderia multivorans (strain ATCC 17616 / 249) protein is tRNA-2-methylthio-N(6)-dimethylallyladenosine synthase.